The sequence spans 1377 residues: MKEIKDFEKIRIKIASPDQIRSWSYGEVKKSETINYRTLRPEKDGLFCERIFGTTKEWECYCGKFKSIRYKGIICDRCNVEVTHFKVRRERMGHIELSAPVAHIWYYKYIPSRIGLLLDITASNLNSILYYEKYIVIEPGDTDLKKMQLLNEDEYSEAKERYGMSFSASMGAEAIKTLLENLDLDELSSKLRLQMIDKDDKTDKKLLRRLEIIENFKVSGNKPEWMIMDVLPVIPPEIRPMVQLDGGRFATSDLNDLYRRVINRNNRLRKLLLLNAPEIIVRNEKRMLQESVDSLFDNSHKRKVVKGTSNRPLKSLSDALKGKQGRFRQNLLGKRVDYSGRSVIVVGPELKLHQCGIPAKMALELFKPFVIRKLIESESVFNIKRAKSLIEQEVDEVWQILDNVIKEHPVLLNRAPTLHRLGIQAFEPVLVEGKAIKLHPLVCHAYNADFDGDQMAVHVPLTPAAQAESWALMLSTNNLLNPANGHPIVFPSQDIVLGLYYLTMERKNVVGEGRKFSNFNHVLLAINNKSLDYNARIYVKVDGEYIETTAGCVVFNEALPGKISFVNKTLSDYELQNLISEVYVVYGSSIVIEMLDIIKELGFKYATKFGCTISMSDIIVPEEKKVYVDKANREIAKIQNDYTKGVITGEERYNNVVSVWSKTNEELTNKMMEILKKDRDGFNVIYMMADSGARGSRNQIRQLAGMRGLMAKTSGDIIELPIISNFKEGLSVIEFFISTNGARKGLADTALKTADAGYLTRRLVDIAQDVVVRIEDCGTINGIKVEALKNGEEIVEPLREKAVGSYSIERIKSPITGEIILDVNEEITEDKIKLLETVGIDKLVIRSVLTCEAEHGVCQKCYGRDFSNNKPVNIGEAVGIIAAQSIGQPGTQLTMRTFHIGGVAQAGSEDDKIALKNSFILNGLEGFNVQVDGGLLFTRKGTLRVINVIYEEDIKDIKEFKVLDSQKVIKGMPLFTSKDGIDVLSSHIGYVRIKDNKLMIVSEEQEISLKTGTKLEVNVGDYVEAGRVIGTFDPFAEPIIAEVRGKVKFKDIILGTTLKEEINLETGNIEKRITDQVFESLDPRILIINDRGIEIASYVLPGDAYLQVEDGQDIDIGDIIAKLSKGSEKTQDITGGLPRVNDLFETRIPKNLTEMAKVSGVVQFKAIQKGKRLINVLDEYGVEHKHYIPAGKHLLVRDGDVVKAGDMLCDGRINPHDVLEILGGISLQEFLLAEIQDVYRKQGVSINDKHIGVIIKQMMKKVKIVSVGDTNFVYNQKVDKHTFYEQNKRVIEQGGEPAVASPILIGITKASLNIDSFISAASFQETTKVLTDASIAGSVDDLKGLKENVVIGHLIPTGTGMNLYKRVKVRENSSSEM.

Residues cysteine 60, cysteine 62, cysteine 75, and cysteine 78 each coordinate Zn(2+). The Mg(2+) site is built by aspartate 449, aspartate 451, and aspartate 453. Residues cysteine 777, cysteine 851, cysteine 858, and cysteine 861 each coordinate Zn(2+).

Belongs to the RNA polymerase beta' chain family. As to quaternary structure, the RNAP catalytic core consists of 2 alpha, 1 beta, 1 beta' and 1 omega subunit. When a sigma factor is associated with the core the holoenzyme is formed, which can initiate transcription. The cofactor is Mg(2+). Zn(2+) serves as cofactor.

The enzyme catalyses RNA(n) + a ribonucleoside 5'-triphosphate = RNA(n+1) + diphosphate. In terms of biological role, DNA-dependent RNA polymerase catalyzes the transcription of DNA into RNA using the four ribonucleoside triphosphates as substrates. The polypeptide is DNA-directed RNA polymerase subunit beta' (Borrelia turicatae (strain 91E135)).